We begin with the raw amino-acid sequence, 199 residues long: Single-stranded DNA-binding protein 2 (199 aa).

In terms of domain architecture, SSB spans 1–110 (MAGETVITVV…LDVDEVGASL (110 aa)). The segment at 114-199 (TAKVTKTSGQ…GGGYSDEPPF (86 aa)) is disordered. The segment covering 123 to 156 (QGRGGQGGYGGGGGGQGGGGWGGGPGGGQQGGGA) has biased composition (gly residues). Low complexity predominate over residues 157 to 166 (PADDPWATGG). Positions 167-193 (APAGGQQGGGGQGGGGWGGGSGGGGGY) are enriched in gly residues.

Homotetramer. Phosphorylated on tyrosine residue(s) when expressed in E.coli.

The protein resides in the cytoplasm. It is found in the nucleoid. The protein is Single-stranded DNA-binding protein 2 (ssb2) of Streptomyces coelicolor (strain ATCC BAA-471 / A3(2) / M145).